The sequence spans 564 residues: Sulfite reductase [NADPH] hemoprotein beta-component 1 (564 aa).

Residues Cys426, Cys432, Cys471, and Cys475 each coordinate [4Fe-4S] cluster. Cys475 is a binding site for siroheme.

This sequence belongs to the nitrite and sulfite reductase 4Fe-4S domain family. Alpha(8)-beta(8). The alpha component is a flavoprotein, the beta component is a hemoprotein. Siroheme serves as cofactor. Requires [4Fe-4S] cluster as cofactor.

It carries out the reaction hydrogen sulfide + 3 NADP(+) + 3 H2O = sulfite + 3 NADPH + 4 H(+). The protein operates within sulfur metabolism; hydrogen sulfide biosynthesis; hydrogen sulfide from sulfite (NADPH route): step 1/1. In terms of biological role, component of the sulfite reductase complex that catalyzes the 6-electron reduction of sulfite to sulfide. This is one of several activities required for the biosynthesis of L-cysteine from sulfate. The polypeptide is Sulfite reductase [NADPH] hemoprotein beta-component 1 (Pectobacterium carotovorum subsp. carotovorum (strain PC1)).